Reading from the N-terminus, the 244-residue chain is tRNA (guanine-N(1)-)-methyltransferase (244 aa).

S-adenosyl-L-methionine contacts are provided by residues glycine 112 and 131-136; that span reads IGDFIV.

It belongs to the RNA methyltransferase TrmD family. As to quaternary structure, homodimer.

The protein resides in the cytoplasm. It carries out the reaction guanosine(37) in tRNA + S-adenosyl-L-methionine = N(1)-methylguanosine(37) in tRNA + S-adenosyl-L-homocysteine + H(+). Its function is as follows. Specifically methylates guanosine-37 in various tRNAs. In Clostridium kluyveri (strain NBRC 12016), this protein is tRNA (guanine-N(1)-)-methyltransferase.